A 143-amino-acid chain; its full sequence is Large ribosomal subunit protein uL11 (143 aa).

This sequence belongs to the universal ribosomal protein uL11 family. As to quaternary structure, part of the ribosomal stalk of the 50S ribosomal subunit. Interacts with L10 and the large rRNA to form the base of the stalk. L10 forms an elongated spine to which L12 dimers bind in a sequential fashion forming a multimeric L10(L12)X complex. One or more lysine residues are methylated.

In terms of biological role, forms part of the ribosomal stalk which helps the ribosome interact with GTP-bound translation factors. This chain is Large ribosomal subunit protein uL11, found in Burkholderia multivorans (strain ATCC 17616 / 249).